We begin with the raw amino-acid sequence, 276 residues long: Bis(5'-nucleosyl)-tetraphosphatase, symmetrical (276 aa).

This sequence belongs to the Ap4A hydrolase family.

It carries out the reaction P(1),P(4)-bis(5'-adenosyl) tetraphosphate + H2O = 2 ADP + 2 H(+). Functionally, hydrolyzes diadenosine 5',5'''-P1,P4-tetraphosphate to yield ADP. In Neisseria gonorrhoeae (strain ATCC 700825 / FA 1090), this protein is Bis(5'-nucleosyl)-tetraphosphatase, symmetrical.